We begin with the raw amino-acid sequence, 141 residues long: Large ribosomal subunit protein uL13 (141 aa).

It belongs to the universal ribosomal protein uL13 family. In terms of assembly, part of the 50S ribosomal subunit.

This protein is one of the early assembly proteins of the 50S ribosomal subunit, although it is not seen to bind rRNA by itself. It is important during the early stages of 50S assembly. This chain is Large ribosomal subunit protein uL13, found in Sulfurovum sp. (strain NBC37-1).